The primary structure comprises 505 residues: Deoxyguanosinetriphosphate triphosphohydrolase (505 aa).

An HD domain is found at 66 to 273 (RLTHSMEVQQ…MEAADDISYC (208 aa)).

It belongs to the dGTPase family. Type 1 subfamily. In terms of assembly, homotetramer. The cofactor is Mg(2+).

The catalysed reaction is dGTP + H2O = 2'-deoxyguanosine + triphosphate + H(+). DGTPase preferentially hydrolyzes dGTP over the other canonical NTPs. The chain is Deoxyguanosinetriphosphate triphosphohydrolase from Escherichia coli O139:H28 (strain E24377A / ETEC).